The sequence spans 190 residues: UPF0200 protein MTH_434 (190 aa).

Residue 10–17 (GMPGAGKG) coordinates ATP.

This sequence belongs to the UPF0200 family.

In Methanothermobacter thermautotrophicus (strain ATCC 29096 / DSM 1053 / JCM 10044 / NBRC 100330 / Delta H) (Methanobacterium thermoautotrophicum), this protein is UPF0200 protein MTH_434.